The chain runs to 338 residues: 5-dehydro-2-deoxygluconokinase (338 aa).

This sequence belongs to the carbohydrate kinase PfkB family.

It catalyses the reaction 5-dehydro-2-deoxy-D-gluconate + ATP = 6-phospho-5-dehydro-2-deoxy-D-gluconate + ADP + H(+). Its pathway is polyol metabolism; myo-inositol degradation into acetyl-CoA; acetyl-CoA from myo-inositol: step 5/7. In terms of biological role, catalyzes the phosphorylation of 5-dehydro-2-deoxy-D-gluconate (2-deoxy-5-keto-D-gluconate or DKG) to 6-phospho-5-dehydro-2-deoxy-D-gluconate (DKGP). This chain is 5-dehydro-2-deoxygluconokinase, found in Mesomycoplasma hyopneumoniae (strain 7448) (Mycoplasma hyopneumoniae).